We begin with the raw amino-acid sequence, 58 residues long: Small integral membrane protein 11 (58 aa).

A helical transmembrane segment spans residues 10-32; that stretch reads PLLLYILAAKTLILCLTFAGVKM. Residues 29 to 58 are a coiled coil; the sequence is GVKMYQRKRLEAKQQKLEAERKKQSEKKDN.

As to expression, expressed in heart, spleen, liver, stomach, muscle, lung, testis, skin, PBL and bone marrow.

It is found in the membrane. The polypeptide is Small integral membrane protein 11 (Homo sapiens (Human)).